Here is a 61-residue protein sequence, read N- to C-terminus: Metallothionein-1B (61 aa).

Positions 1 to 29 (MDPNCSCPTSGSCSCAGSCTCKACRCPSC) are beta. The a divalent metal cation site is built by Cys-5, Cys-7, Cys-13, Cys-15, Cys-19, Cys-21, Cys-24, Cys-26, Cys-29, Cys-33, Cys-34, Cys-36, Cys-37, Cys-41, Cys-44, Cys-48, Cys-50, Cys-57, Cys-59, and Cys-60. Residues 30–61 (KKSCCSCCPVGCAKCAQGCVCKGASDKCSCCA) are alpha.

Belongs to the metallothionein superfamily. Type 1 family.

In terms of biological role, metallothioneins have a high content of cysteine residues that bind various heavy metals; these proteins are transcriptionally regulated by both heavy metals and glucocorticoids. The protein is Metallothionein-1B (MT1B) of Ovis aries (Sheep).